Consider the following 95-residue polypeptide: Putative protein RDUR (95 aa).

Residues 1–12 are compositionally biased toward basic and acidic residues; it reads MNNSFNKEDRMS. Residues 1 to 20 are disordered; sequence MNNSFNKEDRMSSDTMVGSC.

Could play a role in innate immunity against viruses. The sequence is that of Putative protein RDUR from Homo sapiens (Human).